A 317-amino-acid polypeptide reads, in one-letter code: Transaldolase (317 aa).

Lys-132 acts as the Schiff-base intermediate with substrate in catalysis.

It belongs to the transaldolase family. Type 1 subfamily. As to quaternary structure, homodimer.

It is found in the cytoplasm. It catalyses the reaction D-sedoheptulose 7-phosphate + D-glyceraldehyde 3-phosphate = D-erythrose 4-phosphate + beta-D-fructose 6-phosphate. It functions in the pathway carbohydrate degradation; pentose phosphate pathway; D-glyceraldehyde 3-phosphate and beta-D-fructose 6-phosphate from D-ribose 5-phosphate and D-xylulose 5-phosphate (non-oxidative stage): step 2/3. Functionally, transaldolase is important for the balance of metabolites in the pentose-phosphate pathway. In Haemophilus influenzae (strain 86-028NP), this protein is Transaldolase.